The primary structure comprises 175 residues: RNA pyrophosphohydrolase (175 aa).

A Nudix hydrolase domain is found at 7-150 (GYRLNVGIIL…KRQVYIQALK (144 aa)). Residues 39–60 (GGLAPGETAMQAMYRELHEEVG) carry the Nudix box motif.

Belongs to the Nudix hydrolase family. RppH subfamily. The cofactor is a divalent metal cation.

Functionally, accelerates the degradation of transcripts by removing pyrophosphate from the 5'-end of triphosphorylated RNA, leading to a more labile monophosphorylated state that can stimulate subsequent ribonuclease cleavage. This Legionella pneumophila (strain Paris) protein is RNA pyrophosphohydrolase.